The following is a 103-amino-acid chain: Large ribosomal subunit protein bL21 (103 aa).

It belongs to the bacterial ribosomal protein bL21 family. Part of the 50S ribosomal subunit. Contacts protein L20.

Functionally, this protein binds to 23S rRNA in the presence of protein L20. In Shigella sonnei (strain Ss046), this protein is Large ribosomal subunit protein bL21.